Consider the following 151-residue polypeptide: UPF0208 membrane protein YPDSF_1972 (151 aa).

The next 2 membrane-spanning stretches (helical) occupy residues 46–66 (FGIR…IALG) and 69–89 (LGPA…GLWW).

This sequence belongs to the UPF0208 family.

It localises to the cell inner membrane. The protein is UPF0208 membrane protein YPDSF_1972 of Yersinia pestis (strain Pestoides F).